A 448-amino-acid chain; its full sequence is Trk system potassium uptake protein TrkA homolog 2 (448 aa).

Residues 1-124 (MKAVVIGAGE…RAQVGVDIMI (124 aa)) enclose the RCK N-terminal 1 domain. Residues 7 to 11 (GAGEV), glutamate 29, 70 to 71 (TG), and arginine 101 contribute to the NAD(+) site. Positions 144–225 (IDAEMFAGGK…MADLENVFGN (82 aa)) constitute an RCK C-terminal 1 domain. Residues 230–348 (RNRILLIGCG…FEMVGIDIAV (119 aa)) enclose the RCK N-terminal 2 domain. Position 232-262 (232-262 (RILLIGCGIVGFYLAKIIDKDENADLKVIEY)) interacts with NAD(+). The 81-residue stretch at 368-448 (EALATIEGEK…AVRSVEKLFK (81 aa)) folds into the RCK C-terminal 2 domain.

Its function is as follows. Part of a potassium transport system. This is Trk system potassium uptake protein TrkA homolog 2 (trkA2) from Methanosarcina mazei (strain ATCC BAA-159 / DSM 3647 / Goe1 / Go1 / JCM 11833 / OCM 88) (Methanosarcina frisia).